The sequence spans 424 residues: Glutamate-1-semialdehyde 2,1-aminomutase (424 aa).

Lys266 is modified (N6-(pyridoxal phosphate)lysine).

Belongs to the class-III pyridoxal-phosphate-dependent aminotransferase family. HemL subfamily. Homodimer. Pyridoxal 5'-phosphate serves as cofactor.

The protein localises to the cytoplasm. The enzyme catalyses (S)-4-amino-5-oxopentanoate = 5-aminolevulinate. It participates in porphyrin-containing compound metabolism; protoporphyrin-IX biosynthesis; 5-aminolevulinate from L-glutamyl-tRNA(Glu): step 2/2. The polypeptide is Glutamate-1-semialdehyde 2,1-aminomutase (Thermus thermophilus (strain ATCC 27634 / DSM 579 / HB8)).